The following is a 273-amino-acid chain: Undecaprenyl-diphosphatase (273 aa).

Transmembrane regions (helical) follow at residues 6–26, 45–65, 90–110, 116–136, 190–210, 222–242, and 252–272; these read SLLI…LPVS, AKTF…VMFW, LTLI…LLFH, LFNP…LIAA, YAAS…ATAL, GDIP…LIAI, and ISFI…YVVF.

This sequence belongs to the UppP family.

It localises to the cell inner membrane. It carries out the reaction di-trans,octa-cis-undecaprenyl diphosphate + H2O = di-trans,octa-cis-undecaprenyl phosphate + phosphate + H(+). Its function is as follows. Catalyzes the dephosphorylation of undecaprenyl diphosphate (UPP). Confers resistance to bacitracin. The polypeptide is Undecaprenyl-diphosphatase (Escherichia coli O139:H28 (strain E24377A / ETEC)).